Consider the following 267-residue polypeptide: Thiazole synthase (267 aa).

Lysine 107 serves as the catalytic Schiff-base intermediate with DXP. 1-deoxy-D-xylulose 5-phosphate is bound by residues glycine 168, 194–195 (AG), and 216–217 (NT).

Belongs to the ThiG family. Homotetramer. Forms heterodimers with either ThiH or ThiS.

It localises to the cytoplasm. The enzyme catalyses [ThiS sulfur-carrier protein]-C-terminal-Gly-aminoethanethioate + 2-iminoacetate + 1-deoxy-D-xylulose 5-phosphate = [ThiS sulfur-carrier protein]-C-terminal Gly-Gly + 2-[(2R,5Z)-2-carboxy-4-methylthiazol-5(2H)-ylidene]ethyl phosphate + 2 H2O + H(+). It functions in the pathway cofactor biosynthesis; thiamine diphosphate biosynthesis. In terms of biological role, catalyzes the rearrangement of 1-deoxy-D-xylulose 5-phosphate (DXP) to produce the thiazole phosphate moiety of thiamine. Sulfur is provided by the thiocarboxylate moiety of the carrier protein ThiS. In vitro, sulfur can be provided by H(2)S. The chain is Thiazole synthase from Aquifex aeolicus (strain VF5).